The following is a 462-amino-acid chain: MSMSSSNITSGFIDIATFDEIEKYMYGGPTATAYFVREIRKSTWFTQVPVPLSRNTGNAAFGQEWSVSISRAGDYLLQTWLRVNIPQVTLNAQLGPTFGLRWTRNFMHNLIREATITFNDLVAARFDNYHLDFWSAFTVPASKKIGYDNMIGNISALTNPVAPGGSLGSVGGINLNLPLPFFFSRDTGVALPTAALPYNEMQINFNFRDWPELLILTNTALVPPASPYVPIVVGTHLSAAPVLGAVQVWANYAIVSNEERRRMGCAIRDILIEQVQTAPRQNYTPLTNAMPTFDIRFSHAIKALFFSVRNKTSSAEWSNYATSSPVVTGQLVNYEPPGAFDPISNTTLIYENTNRLGAMGSDYFSLINPFYHAPTIPSSIGYHLYSYSLHFFDLDPMGSTNYGKLTNVSVVPQASPAAVTAAGGSGAAGSGADYAQSYEFVIIGVNNNIIRISGGALGFPVL.

The protein belongs to the NCLDV major capsid protein family. Homotrimer.

Its subcellular location is the virion. Its function is as follows. Major capsid protein that self assembles to form an icosahedral capsid. Represents around 50% of the total virion protein mass. This Costelytra zealandica (CzIV) protein is Major capsid protein (MCP).